We begin with the raw amino-acid sequence, 421 residues long: NADH-dependent phenylglyoxylate dehydrogenase subunit epsilon (421 aa).

Residues 15 to 18 (SSHA), 39 to 40 (TR), and 279 to 297 (ATAQ…NAIL) each bind FAD.

The protein belongs to the FAD-dependent oxidoreductase family. In terms of assembly, dimer of heteropentamers composed of an alpha (PadG), a beta (PadI), a gamma (PadE), a delta (PadF) and an epsilon (PadH) subunit. FAD is required as a cofactor.

The catalysed reaction is phenylglyoxylate + NAD(+) + CoA = benzoyl-CoA + CO2 + NADH. Its activity is regulated as follows. Activated by magnesium ions and thiamine diphosphate. Involved in the anaerobic metabolism of phenylalanine and phenylacetate. Catalyzes the oxidative decarboxylation of phenylglyoxylate to benzoyl-CoA and CO(2). It can also react slowly with 2-oxo-3-methylbutanoate and use different electron acceptors such as benzyl viologen, methyl viologen, FAD or FMN, but NAD seems to be the physiological electron acceptor. Also catalyzes an isotope exchange between CO(2) and the carboxyl group which proves partial or complete reversibility of the oxidative decarboxylation reaction. This Aromatoleum evansii (Azoarcus evansii) protein is NADH-dependent phenylglyoxylate dehydrogenase subunit epsilon (padH).